We begin with the raw amino-acid sequence, 253 residues long: Lys-63-specific deubiquitinase BRCC36 (253 aa).

In terms of domain architecture, MPN spans 9–145; the sequence is VELQTDVYMV…KEHEIFLNCF (137 aa). Zn(2+) is bound by residues histidine 94, histidine 96, and aspartate 107. Residues 94–107 carry the JAMM motif motif; sequence HSHPHITVCPSHVD. The stretch at 227–249 forms a coiled coil; that stretch reads EKRIALNKLRATHLQRQLQELQK.

This sequence belongs to the peptidase M67A family. BRCC36 subfamily. As to quaternary structure, component of the BRISC complex, at least composed of ABRAXAS2, BRCC3/BRCC36, BABAM2 and BABAM1/NBA1. Within the complex, interacts directly with ABRAXAS2. The heterodimer with ABRAXAS2 assembles into a heterotetramer. The BRISC complex binds polyubiquitin. The cofactor is Zn(2+).

It localises to the cytoplasm. It is found in the nucleus. The protein localises to the cytoskeleton. The protein resides in the spindle pole. In terms of biological role, metalloprotease that specifically cleaves 'Lys-63'-linked polyubiquitin chains, leaving the last ubiquitin chain attached to its substrates. Catalytic subunit of the BRISC complex; does not have activity by itself, but needs to be associated into a heterotetramer with ABRAXAS2 for minimal in vitro activity. Plays a role in regulating the onset of apoptosis via its role in modulating 'Lys-63'-linked ubiquitination of target proteins. Required for normal mitotic spindle assembly and microtubule attachment to kinetochores via its role in deubiquitinating spindle assembly factors. The sequence is that of Lys-63-specific deubiquitinase BRCC36 from Camponotus floridanus (Florida carpenter ant).